Reading from the N-terminus, the 421-residue chain is ATP-dependent RNA helicase RhlB (421 aa).

The Q motif motif lies at 9–37 (QKFSDFALHPQVVEALEKKGFYNCTPIQA). Residues 40-219 (LPLTLAGRDV…FEQMNNAEYV (180 aa)) form the Helicase ATP-binding domain. Position 53–60 (53–60 (AQTGTGKT)) interacts with ATP. Residues 165 to 168 (DEAD) carry the DEAD box motif. Positions 245–390 (RLLQTLIEEE…VSKYNPEALM (146 aa)) constitute a Helicase C-terminal domain. The disordered stretch occupies residues 396–421 (PLRLTRSRPGNGPRRAGAPRNRRRSG). Residues 402–414 (SRPGNGPRRAGAP) are compositionally biased toward low complexity.

The protein belongs to the DEAD box helicase family. RhlB subfamily. In terms of assembly, component of the RNA degradosome, which is a multiprotein complex involved in RNA processing and mRNA degradation.

The protein resides in the cytoplasm. It catalyses the reaction ATP + H2O = ADP + phosphate + H(+). Its function is as follows. DEAD-box RNA helicase involved in RNA degradation. Has RNA-dependent ATPase activity and unwinds double-stranded RNA. The sequence is that of ATP-dependent RNA helicase RhlB from Salmonella paratyphi A (strain AKU_12601).